We begin with the raw amino-acid sequence, 334 residues long: Holliday junction branch migration complex subunit RuvB (334 aa).

Positions Met1–Tyr179 are large ATPase domain (RuvB-L). ATP-binding positions include Leu18, Arg19, Gly60, Lys63, Thr64, Ser65, Glu126–Phe128, Arg169, Tyr179, and Arg216. Thr64 is a Mg(2+) binding site. The tract at residues Thr180 to Leu250 is small ATPAse domain (RuvB-S). The segment at Asn253–Glu334 is head domain (RuvB-H). DNA is bound by residues Arg308 and Arg313.

Belongs to the RuvB family. In terms of assembly, homohexamer. Forms an RuvA(8)-RuvB(12)-Holliday junction (HJ) complex. HJ DNA is sandwiched between 2 RuvA tetramers; dsDNA enters through RuvA and exits via RuvB. An RuvB hexamer assembles on each DNA strand where it exits the tetramer. Each RuvB hexamer is contacted by two RuvA subunits (via domain III) on 2 adjacent RuvB subunits; this complex drives branch migration. In the full resolvosome a probable DNA-RuvA(4)-RuvB(12)-RuvC(2) complex forms which resolves the HJ.

The protein resides in the cytoplasm. It carries out the reaction ATP + H2O = ADP + phosphate + H(+). Functionally, the RuvA-RuvB-RuvC complex processes Holliday junction (HJ) DNA during genetic recombination and DNA repair, while the RuvA-RuvB complex plays an important role in the rescue of blocked DNA replication forks via replication fork reversal (RFR). RuvA specifically binds to HJ cruciform DNA, conferring on it an open structure. The RuvB hexamer acts as an ATP-dependent pump, pulling dsDNA into and through the RuvAB complex. RuvB forms 2 homohexamers on either side of HJ DNA bound by 1 or 2 RuvA tetramers; 4 subunits per hexamer contact DNA at a time. Coordinated motions by a converter formed by DNA-disengaged RuvB subunits stimulates ATP hydrolysis and nucleotide exchange. Immobilization of the converter enables RuvB to convert the ATP-contained energy into a lever motion, pulling 2 nucleotides of DNA out of the RuvA tetramer per ATP hydrolyzed, thus driving DNA branch migration. The RuvB motors rotate together with the DNA substrate, which together with the progressing nucleotide cycle form the mechanistic basis for DNA recombination by continuous HJ branch migration. Branch migration allows RuvC to scan DNA until it finds its consensus sequence, where it cleaves and resolves cruciform DNA. This is Holliday junction branch migration complex subunit RuvB from Chlamydia trachomatis serovar A (strain ATCC VR-571B / DSM 19440 / HAR-13).